The following is a 281-amino-acid chain: MTQLNVVNDINHAGNWLIRNQELLLSYIINLISSIIILIIGFFAAKIISNLINKVLITQKIDTTIANFLAALVRYIIITFALIASLGCIGVQTTSVIAILGAAGMAIGLALQGSLSNFAAGVLLVILRPFRTGEYVNLEKISGTVLNIHVFYTTFRTLDGKIVVIPNGKIISGNIINYSREKARRNEFIIGVSYDSDIDKVIKILKNVVKNEKRVLKDRDIIVGLSELAPSSLNFIVRCWSHTDDINIVYWDLMVKFKKALDSNNINIPYPQFDINLKKKY.

3 consecutive transmembrane segments (helical) span residues 23–45 (LLLSYIINLISSIIILIIGFFAA), 65–87 (IANFLAALVRYIIITFALIASLG), and 94–116 (TSVIAILGAAGMAIGLALQGSLS).

This sequence belongs to the MscS (TC 1.A.23) family.

It localises to the cell membrane. This is an uncharacterized protein from Buchnera aphidicola subsp. Baizongia pistaciae (strain Bp).